The sequence spans 134 residues: Phospholipase A2 (134 aa).

Positions 8, 10, and 12 each coordinate Ca(2+). Intrachain disulfides connect Cys-9/Cys-31, Cys-30/Cys-70, Cys-37/Cys-63, Cys-61/Cys-95, and Cys-105/Cys-113. A glycan (N-linked (GlcNAc...) asparagine) is linked at Asn-13. His-34 is an active-site residue. Asp-35 contributes to the Ca(2+) binding site. Asp-64 is a catalytic residue.

It belongs to the phospholipase A2 family. Group III subfamily. Ca(2+) serves as cofactor. Expressed by the venom gland.

The protein localises to the secreted. The catalysed reaction is a 1,2-diacyl-sn-glycero-3-phosphocholine + H2O = a 1-acyl-sn-glycero-3-phosphocholine + a fatty acid + H(+). Its function is as follows. PLA2 catalyzes the calcium-dependent hydrolysis of the 2-acyl groups in 3-sn-phosphoglycerides. The sequence is that of Phospholipase A2 from Apis cerana cerana (Oriental honeybee).